Here is a 284-residue protein sequence, read N- to C-terminus: Tropomyosin (284 aa).

Positions 1–284 (MDAIKKKMLA…DSTFAELAGY (284 aa)) form a coiled coil. The disordered stretch occupies residues 105–131 (RLQSATEKLEEASKAADESERGRKVLE).

The protein belongs to the tropomyosin family. As to quaternary structure, homodimer.

Functionally, tropomyosin, in association with the troponin complex, plays a central role in the calcium dependent regulation of muscle contraction. This chain is Tropomyosin, found in Cornu aspersum (Brown garden snail).